A 228-amino-acid polypeptide reads, in one-letter code: UPF0758 protein STER_1430 (228 aa).

The region spanning 103 to 225 (QIMSSQQVAR…YYSFREERED (123 aa)) is the MPN domain. Zn(2+)-binding residues include His-174, His-176, and Asp-187. Residues 174 to 187 (HNHPSGEAYPSRND) carry the JAMM motif motif.

Belongs to the UPF0758 family.

This is UPF0758 protein STER_1430 from Streptococcus thermophilus (strain ATCC BAA-491 / LMD-9).